Reading from the N-terminus, the 318-residue chain is Phosphatidylglycerol--prolipoprotein diacylglyceryl transferase (318 aa).

7 helical membrane passes run 23–43, 59–79, 98–118, 124–146, 192–212, 219–239, and 253–273; these read PLTI…GAWL, MDII…YHVI, IWEG…GAAI, GVRL…AMGR, FQPT…LLVF, LGAG…RFIF, and LRVN…VFLI. R146 contributes to the a 1,2-diacyl-sn-glycero-3-phospho-(1'-sn-glycerol) binding site. A compositionally biased stretch (basic and acidic residues) spans 293 to 312; it reads FDTRANGHDPEKHDETDGKG. Residues 293 to 318 form a disordered region; sequence FDTRANGHDPEKHDETDGKGNRHHVP.

This sequence belongs to the Lgt family.

It is found in the cell membrane. The catalysed reaction is L-cysteinyl-[prolipoprotein] + a 1,2-diacyl-sn-glycero-3-phospho-(1'-sn-glycerol) = an S-1,2-diacyl-sn-glyceryl-L-cysteinyl-[prolipoprotein] + sn-glycerol 1-phosphate + H(+). The protein operates within protein modification; lipoprotein biosynthesis (diacylglyceryl transfer). In terms of biological role, catalyzes the transfer of the diacylglyceryl group from phosphatidylglycerol to the sulfhydryl group of the N-terminal cysteine of a prolipoprotein, the first step in the formation of mature lipoproteins. This is Phosphatidylglycerol--prolipoprotein diacylglyceryl transferase from Paenarthrobacter aurescens (strain TC1).